A 105-amino-acid chain; its full sequence is ATP synthase subunit c (105 aa).

The next 3 membrane-spanning stretches (helical) occupy residues 3-23 (FLALFFLALVGVAFAYDGGMD), 32-52 (SILGAMIGLGIAAFGGAIGMG), and 78-98 (VAMAMIEAQVIYTLVFAIIAI).

This sequence belongs to the ATPase C chain family. F-type ATPases have 2 components, F(1) - the catalytic core - and F(0) - the membrane proton channel. F(1) has five subunits: alpha(3), beta(3), gamma(1), delta(1), epsilon(1). F(0) has three main subunits: a(1), b(2) and c(10-14). The alpha and beta chains form an alternating ring which encloses part of the gamma chain. F(1) is attached to F(0) by a central stalk formed by the gamma and epsilon chains, while a peripheral stalk is formed by the delta and b chains.

The protein localises to the cell inner membrane. F(1)F(0) ATP synthase produces ATP from ADP in the presence of a proton or sodium gradient. F-type ATPases consist of two structural domains, F(1) containing the extramembraneous catalytic core and F(0) containing the membrane proton channel, linked together by a central stalk and a peripheral stalk. During catalysis, ATP synthesis in the catalytic domain of F(1) is coupled via a rotary mechanism of the central stalk subunits to proton translocation. In terms of biological role, key component of the F(0) channel; it plays a direct role in translocation across the membrane. A homomeric c-ring of between 10-14 subunits forms the central stalk rotor element with the F(1) delta and epsilon subunits. In Helicobacter acinonychis (strain Sheeba), this protein is ATP synthase subunit c.